Here is a 20-residue protein sequence, read N- to C-terminus: 26 kDa protein (20 aa).

The chain is 26 kDa protein from Bacillus cereus.